We begin with the raw amino-acid sequence, 96 residues long: Large ribosomal subunit protein uL4 (96 aa).

The interval arginine 77 to leucine 96 is disordered. A compositionally biased stretch (basic residues) spans proline 79–leucine 96.

The protein belongs to the universal ribosomal protein uL4 family. As to quaternary structure, component of the large ribosomal subunit.

It is found in the cytoplasm. Functionally, component of the large ribosomal subunit. The ribosome is a large ribonucleoprotein complex responsible for the synthesis of proteins in the cell. This chain is Large ribosomal subunit protein uL4 (rpl4), found in Xenopus tropicalis (Western clawed frog).